Reading from the N-terminus, the 264-residue chain is uncharacterized protein (264 aa).

Residues 1–26 (MMKKLFHSTLIVLLFFSFFGVQPIHA) form the signal peptide.

This is an uncharacterized protein from Bacillus subtilis (strain 168).